Here is an 877-residue protein sequence, read N- to C-terminus: Alpha-glucosidase (877 aa).

Positions 1-23 are cleaved as a signal peptide; sequence MATVGVLLLCLCLCLFAPRLCSS. Residues 89–115 form a disordered region; that stretch reads VPQDIIPRPAPGDVLHDAPPASSAPLQ. N-linked (GlcNAc...) asparagine glycosylation is found at Asn-191, Asn-298, Asn-338, and Asn-391. Active-site residues include Asp-437 and Glu-440. Asn-471 is a glycosylation site (N-linked (GlcNAc...) asparagine). The active-site Proton donor is Asp-534. Asn-570 is a glycosylation site (N-linked (GlcNAc...) asparagine).

It belongs to the glycosyl hydrolase 31 family. As to expression, high levels seen in the aleurone and scutellum after germination, while low levels are found in developing seeds.

It carries out the reaction Hydrolysis of terminal, non-reducing (1-&gt;4)-linked alpha-D-glucose residues with release of alpha-D-glucose.. The sequence is that of Alpha-glucosidase from Hordeum vulgare (Barley).